Consider the following 362-residue polypeptide: MERIVVTLGERSYPITIASGLFNEPASFLPLKSGEQVMLVTNETLAPLYLDKVRGVLEQAGVNVDSVILPDGEQYKSLAVLDTVFTALLQKPHGRDTTLVALGGGVVGDLTGFAAASYQRGVRFIQVPTTLLSQVDSSVGGKTAVNHPLGKNMIGAFYQPASVVVDLDCLKTLPPRELASGLAEVIKYGIILDGAFFNWLEENLDALLRLDGPAMAYCIRRCCELKAEVVAADERETGLRALLNLGHTFGHAIEAEMGYGNWLHGEAVAVGMVMAARTSERLGQFSSAETQRIITLLTRAGLPVNGPREMSAQAYLPHMLRDKKVLAGEMRLILPLAIGKSEVRSGVSHELVLNAIADCQSA.

Residues 71-76, 105-109, 129-130, K142, K151, and 169-172 each bind NAD(+); these read DGEQYK, GVVGD, TT, and CLKT. Zn(2+)-binding residues include E184, H247, and H264.

This sequence belongs to the sugar phosphate cyclases superfamily. Dehydroquinate synthase family. The cofactor is Co(2+). Zn(2+) is required as a cofactor. NAD(+) serves as cofactor.

It is found in the cytoplasm. It catalyses the reaction 7-phospho-2-dehydro-3-deoxy-D-arabino-heptonate = 3-dehydroquinate + phosphate. It functions in the pathway metabolic intermediate biosynthesis; chorismate biosynthesis; chorismate from D-erythrose 4-phosphate and phosphoenolpyruvate: step 2/7. Functionally, catalyzes the conversion of 3-deoxy-D-arabino-heptulosonate 7-phosphate (DAHP) to dehydroquinate (DHQ). In Escherichia coli O81 (strain ED1a), this protein is 3-dehydroquinate synthase.